Reading from the N-terminus, the 59-residue chain is Single-pass membrane and coiled-coil domain-containing protein 4 homolog (59 aa).

Residues 1-11 (MAGRNKAKPRL) show a composition bias toward basic residues. Residues 1–20 (MAGRNKAKPRLSKKEKEERR) are disordered. Residues 10 to 30 (RLSKKEKEERRKDMAEVQEKV) adopt a coiled-coil conformation. The chain crosses the membrane as a helical span at residues 30 to 50 (VFSVVVPVVVAFTVVIMLIVY).

Belongs to the SMCO4 family.

It localises to the membrane. This chain is Single-pass membrane and coiled-coil domain-containing protein 4 homolog, found in Argas monolakensis (Mono lake bird tick).